We begin with the raw amino-acid sequence, 245 residues long: MIDVIMTGELLKTVTRAIVALVSEARIHFLEKGLHSRAVDPANVAMVIVDIPKDSFEVYNIDEEKTIGVDMDRIFDISKSISTKDLVELIVEDESTLKVKFGSVEYKVALIDPSAIRKEPRIPELELPAKIVMDAGEFKKAIAAADKISDQVIFRSDKEGFRIEAKGDVDSIVFHMTETELIEFNGGEARSMFSVDYLKEFCKVAGSGDLLTIHLGTNYPVRLVFELVGGRAKVEYILAPRIESE.

Belongs to the PCNA family. In terms of assembly, homotrimer. The subunits circularize to form a toroid; DNA passes through its center. Replication factor C (RFC) is required to load the toroid on the DNA.

Sliding clamp subunit that acts as a moving platform for DNA processing. Responsible for tethering the catalytic subunit of DNA polymerase and other proteins to DNA during high-speed replication. This is DNA polymerase sliding clamp from Archaeoglobus fulgidus (strain ATCC 49558 / DSM 4304 / JCM 9628 / NBRC 100126 / VC-16).